Reading from the N-terminus, the 159-residue chain is Cyclic pyranopterin monophosphate synthase (159 aa).

Residues 76–78 (LCH) and 114–115 (ME) contribute to the substrate site. The active site involves Asp-129.

Belongs to the MoaC family. As to quaternary structure, homohexamer; trimer of dimers.

The enzyme catalyses (8S)-3',8-cyclo-7,8-dihydroguanosine 5'-triphosphate = cyclic pyranopterin phosphate + diphosphate. The protein operates within cofactor biosynthesis; molybdopterin biosynthesis. Catalyzes the conversion of (8S)-3',8-cyclo-7,8-dihydroguanosine 5'-triphosphate to cyclic pyranopterin monophosphate (cPMP). In Psychromonas ingrahamii (strain DSM 17664 / CCUG 51855 / 37), this protein is Cyclic pyranopterin monophosphate synthase.